The sequence spans 407 residues: Negative RAS protein regulator protein (407 aa).

Disordered regions lie at residues 51-94 (PRII…ARQI), 165-187 (HPSK…NLNF), and 241-273 (NNNN…NVFS). Residues 55-73 (SSSNSNSNSNSNSNSNSNS) are compositionally biased toward low complexity. The Myb-like domain maps to 90–158 (SARQIRKKWK…QCHDRFKVLY (69 aa)). Residues 165-177 (HPSKKSKQKKKKS) show a composition bias toward basic residues. Low complexity predominate over residues 241 to 270 (NNNNNNINNSNNSNNNNSNNINRNSNHSTN).

Its subcellular location is the nucleus. Its function is as follows. Negative regulator of the Ras-cyclic AMP pathway. Negatively regulate the activity of normal but not mutationally activated Ras proteins. The down-regulatory effect of RPI1 requires the presence of one of the two Ras GTPase activators, IRA1 and IRA2. This chain is Negative RAS protein regulator protein (RPI1), found in Saccharomyces cerevisiae (strain ATCC 204508 / S288c) (Baker's yeast).